The following is a 419-amino-acid chain: Adenylosuccinate synthetase (419 aa).

GTP contacts are provided by residues 11 to 17 (GDEGKGK) and 39 to 41 (GHT). D12 functions as the Proton acceptor in the catalytic mechanism. D12 and G39 together coordinate Mg(2+). Residues 12–15 (DEGK), 37–40 (NAGH), T129, R143, N218, T233, and R297 contribute to the IMP site. The Proton donor role is filled by H40. 293-299 (VTTGRKR) is a substrate binding site. Residues R299, 325–327 (KLD), and 407–409 (GTG) contribute to the GTP site.

This sequence belongs to the adenylosuccinate synthetase family. Homodimer. Requires Mg(2+) as cofactor.

The protein localises to the cytoplasm. It catalyses the reaction IMP + L-aspartate + GTP = N(6)-(1,2-dicarboxyethyl)-AMP + GDP + phosphate + 2 H(+). It participates in purine metabolism; AMP biosynthesis via de novo pathway; AMP from IMP: step 1/2. Functionally, plays an important role in the de novo pathway and in the salvage pathway of purine nucleotide biosynthesis. Catalyzes the first committed step in the biosynthesis of AMP from IMP. The polypeptide is Adenylosuccinate synthetase (Coccidioides posadasii (strain C735) (Valley fever fungus)).